Reading from the N-terminus, the 95-residue chain is Integration host factor subunit beta (95 aa).

The interval S52 to D95 is disordered. A compositionally biased stretch (basic and acidic residues) spans P82–D95.

This sequence belongs to the bacterial histone-like protein family. As to quaternary structure, heterodimer of an alpha and a beta chain.

In terms of biological role, this protein is one of the two subunits of integration host factor, a specific DNA-binding protein that functions in genetic recombination as well as in transcriptional and translational control. The polypeptide is Integration host factor subunit beta (Methylococcus capsulatus (strain ATCC 33009 / NCIMB 11132 / Bath)).